We begin with the raw amino-acid sequence, 643 residues long: 1-deoxy-D-xylulose-5-phosphate synthase (643 aa).

Residues His-78 and 119 to 121 (AHS) each bind thiamine diphosphate. Asp-150 is a binding site for Mg(2+). Residues 151-152 (GS), Asn-179, Tyr-288, and Glu-370 contribute to the thiamine diphosphate site. Residue Asn-179 coordinates Mg(2+).

Belongs to the transketolase family. DXPS subfamily. Homodimer. Mg(2+) serves as cofactor. The cofactor is thiamine diphosphate.

It catalyses the reaction D-glyceraldehyde 3-phosphate + pyruvate + H(+) = 1-deoxy-D-xylulose 5-phosphate + CO2. The protein operates within metabolic intermediate biosynthesis; 1-deoxy-D-xylulose 5-phosphate biosynthesis; 1-deoxy-D-xylulose 5-phosphate from D-glyceraldehyde 3-phosphate and pyruvate: step 1/1. Catalyzes the acyloin condensation reaction between C atoms 2 and 3 of pyruvate and glyceraldehyde 3-phosphate to yield 1-deoxy-D-xylulose-5-phosphate (DXP). This chain is 1-deoxy-D-xylulose-5-phosphate synthase, found in Brucella melitensis biotype 2 (strain ATCC 23457).